The primary structure comprises 81 residues: Short neurotoxin 1 (81 aa).

The first 21 residues, 1 to 21, serve as a signal peptide directing secretion; that stretch reads MKTLLLTLVVVTIVCLDLGYT. 4 cysteine pairs are disulfide-bonded: Cys24/Cys43, Cys38/Cys60, Cys62/Cys73, and Cys74/Cys79.

It belongs to the three-finger toxin family. Short-chain subfamily. Type I alpha-neurotoxin sub-subfamily. As to expression, expressed by the venom gland.

The protein resides in the secreted. In terms of biological role, binds to muscle nicotinic acetylcholine receptor (nAChR) and inhibit acetylcholine from binding to the receptor, thereby impairing neuromuscular transmission. The polypeptide is Short neurotoxin 1 (Hoplocephalus stephensii (Stephens's banded snake)).